A 467-amino-acid polypeptide reads, in one-letter code: MDRKGIVLGSKLAVFSMILLWHRHGVDQPRNPWSDGPEFITQCPIRPCGNFTYQVILFEEEGTLWWHAHSDFDRATVHGAIVIHPKHGTTFPFNKPDKEIPIILSEWWNDDVENVLDEAKRTGGDQGNTYLLRVINTGLTNDMFFAVAGHCLTVVSIDARYTKPLTVDYIMIAPGQTMDVLLEANRTLGSNSRYYMAARAFITLPVDTIPFNNSTATAIVEYTDSPTARPPGPPEFPLLLPAIKDEDAAMAFVDERMLIDIDVNFLPCDTTNATNKLCKGPQGNQFAASLNNVSFESPAIDVLDAYYYGSGRGVYEEDFPNKPVNAFVNPTGDNGGRPLLTKRGTKVKVVEYGTVVEVVFQDLSSENHPMHLHGFAFYVVGRGSGTFDERRDPATYNLVDPPFQNTVSVPKSSWAAIRFRADNPGVWFMHCHFDRHVVWGMDTVFIVKDGKTPQAQMLPRPPNMPEC.

3 consecutive Plastocyanin-like domains span residues 7–88 (VLGS…PKHG), 98–225 (KEIP…YTDS), and 318–451 (DFPN…KDGK). The Cu cation site is built by His22, His24, His67, and His69. Cu cation-binding residues include His368, His371, His373, His430, Cys431, His432, His436, and Met441.

The protein belongs to the multicopper oxidase family. Requires Cu cation as cofactor.

Its subcellular location is the secreted. It localises to the extracellular space. The protein resides in the apoplast. It catalyses the reaction 4 hydroquinone + O2 = 4 benzosemiquinone + 2 H2O. In terms of biological role, lignin degradation and detoxification of lignin-derived products. This chain is Putative laccase-16 (LAC16), found in Oryza sativa subsp. japonica (Rice).